We begin with the raw amino-acid sequence, 122 residues long: Large ribosomal subunit protein bL12 (122 aa).

The protein belongs to the bacterial ribosomal protein bL12 family. As to quaternary structure, homodimer. Part of the ribosomal stalk of the 50S ribosomal subunit. Forms a multimeric L10(L12)X complex, where L10 forms an elongated spine to which 2 to 4 L12 dimers bind in a sequential fashion. Binds GTP-bound translation factors.

Forms part of the ribosomal stalk which helps the ribosome interact with GTP-bound translation factors. Is thus essential for accurate translation. The chain is Large ribosomal subunit protein bL12 from Vibrio parahaemolyticus serotype O3:K6 (strain RIMD 2210633).